Consider the following 563-residue polypeptide: Arginine--tRNA ligase (563 aa).

The 'HIGH' region signature appears at 108-118 (PNVAKEMHVGH).

Belongs to the class-I aminoacyl-tRNA synthetase family. Monomer.

It is found in the cytoplasm. The enzyme catalyses tRNA(Arg) + L-arginine + ATP = L-arginyl-tRNA(Arg) + AMP + diphosphate. In Pasteurella multocida (strain Pm70), this protein is Arginine--tRNA ligase (argS).